A 359-amino-acid polypeptide reads, in one-letter code: Glucose 1-dehydrogenase (359 aa).

Cysteine 39 contributes to the Zn(2+) binding site. Threonine 41 is a substrate binding site. The Zn(2+) site is built by histidine 64 and glutamate 65. Residues glutamate 116 and glutamate 152 each coordinate substrate. Glutamate 152 lines the Zn(2+) pocket. 183 to 186 contributes to the NADP(+) binding site; sequence AGPI.

The protein belongs to the zinc-containing alcohol dehydrogenase family. Glucose 1-dehydrogenase subfamily. Requires Zn(2+) as cofactor.

The catalysed reaction is D-glucose + NAD(+) = D-glucono-1,5-lactone + NADH + H(+). It catalyses the reaction D-glucose + NADP(+) = D-glucono-1,5-lactone + NADPH + H(+). Functionally, catalyzes the NAD(P)(+)-dependent oxidation of D-glucose to D-gluconate via gluconolactone. Can utilize both NAD(+) and NADP(+) as electron acceptor. Is involved in the degradation of glucose through a non-phosphorylative variant of the Entner-Doudoroff pathway. The polypeptide is Glucose 1-dehydrogenase (Methanocella arvoryzae (strain DSM 22066 / NBRC 105507 / MRE50)).